A 148-amino-acid chain; its full sequence is D-aminoacyl-tRNA deacylase (148 aa).

A Gly-cisPro motif, important for rejection of L-amino acids motif is present at residues Gly137–Pro138.

Belongs to the DTD family. Homodimer.

The protein localises to the cytoplasm. The catalysed reaction is glycyl-tRNA(Ala) + H2O = tRNA(Ala) + glycine + H(+). It catalyses the reaction a D-aminoacyl-tRNA + H2O = a tRNA + a D-alpha-amino acid + H(+). Its function is as follows. An aminoacyl-tRNA editing enzyme that deacylates mischarged D-aminoacyl-tRNAs. Also deacylates mischarged glycyl-tRNA(Ala), protecting cells against glycine mischarging by AlaRS. Acts via tRNA-based rather than protein-based catalysis; rejects L-amino acids rather than detecting D-amino acids in the active site. By recycling D-aminoacyl-tRNA to D-amino acids and free tRNA molecules, this enzyme counteracts the toxicity associated with the formation of D-aminoacyl-tRNA entities in vivo and helps enforce protein L-homochirality. This is D-aminoacyl-tRNA deacylase from Deinococcus geothermalis (strain DSM 11300 / CIP 105573 / AG-3a).